The primary structure comprises 435 residues: Evolutionarily conserved signaling intermediate in Toll pathway, mitochondrial (435 aa).

The transit peptide at 1-48 directs the protein to the mitochondrion; the sequence is MSWVQVNLLVRSLSRGWGGLCRPALSGTPFAQVSLQALRGLHCSAATH. Residue lysine 372 forms a Glycyl lysine isopeptide (Lys-Gly) (interchain with G-Cter in ubiquitin) linkage. Residues 401 to 435 are disordered; it reads LTTSRLEGQSPPHSPPKGPEEDDETIQAEQQQGQS.

This sequence belongs to the ECSIT family. As to quaternary structure, interacts with MAP3K1, SMAD4 and TRAF6. Interacts with SMAD1 only after BMP4-treatment. Part of the mitochondrial complex I assembly/MCIA complex that comprises at least the core subunits TMEM126B, NDUFAF1, ECSIT and ACAD9 and complement subunits such as COA1 and TMEM186. Interacts with NDUFAF1. Interacts with ACAD9. Interacts with TRIM59. Interacts with TMEM70 and TMEM242. Interacts (when ubiquitinated) with NF-kappa-B subunits RELA and NFKB1. Interacts with RIGI, IFIT1 and MAVS; these interactions promote RLR-mediated type I IFN induction. Interacts with SQSTM1; this interaction inhibits TLR4 signaling via functional regulation of the TRAF6-ECSIT complex. Interacts with cereblon/CRBN; this interaction inhibits the ubiquitination of ECSIT. Ubiquitinated on Lys-372; leading to translocation in the nucleus together with RELA and NFKB1 and expression of NF-kappa-B-dependent genes. As to expression, detected in heart, brain, lung, liver, skeletal muscle, kidney and testis. Detected in embryonic mesoderm and epiblast, and in extraembryonic ectoderm.

It localises to the cytoplasm. It is found in the nucleus. The protein resides in the mitochondrion. Adapter protein that plays a role in different signaling pathways including TLRs and IL-1 pathways or innate antiviral induction signaling. Plays a role in the activation of NF-kappa-B by forming a signal complex with TRAF6 and TAK1/MAP3K7 to activate TAK1/MAP3K7 leading to activation of IKKs. Once ubiquitinated, interacts with the dissociated RELA and NFKB1 proteins and translocates to the nucleus where it induces NF-kappa-B-dependent gene expression. Plays a role in innate antiviral immune response by bridging the pattern recognition receptors RIGI and MDA5/IFIT1 to the MAVS complex at the mitochondrion. Promotes proteolytic activation of MAP3K1. Involved in the BMP signaling pathway. Required for normal embryonic development. Its function is as follows. As part of the MCIA complex, involved in the assembly of the mitochondrial complex I. The sequence is that of Evolutionarily conserved signaling intermediate in Toll pathway, mitochondrial from Mus musculus (Mouse).